We begin with the raw amino-acid sequence, 208 residues long: Uracil phosphoribosyltransferase (208 aa).

5-phospho-alpha-D-ribose 1-diphosphate is bound by residues arginine 78, arginine 103, and 130-138 (DPMLATGGS). Residues isoleucine 193 and 198–200 (GDA) contribute to the uracil site. Residue aspartate 199 coordinates 5-phospho-alpha-D-ribose 1-diphosphate.

Belongs to the UPRTase family. Requires Mg(2+) as cofactor.

It catalyses the reaction UMP + diphosphate = 5-phospho-alpha-D-ribose 1-diphosphate + uracil. Its pathway is pyrimidine metabolism; UMP biosynthesis via salvage pathway; UMP from uracil: step 1/1. Its activity is regulated as follows. Allosterically activated by GTP. Catalyzes the conversion of uracil and 5-phospho-alpha-D-ribose 1-diphosphate (PRPP) to UMP and diphosphate. The polypeptide is Uracil phosphoribosyltransferase (Escherichia coli O139:H28 (strain E24377A / ETEC)).